A 375-amino-acid polypeptide reads, in one-letter code: Putative disease resistance protein At3g15700 (375 aa).

Residues 17–49 (KENDNVKKLKTATEELKDLRNIVMKRVKMYEDQ) adopt a coiled-coil conformation. One can recognise an NB-ARC domain in the interval 158 to 372 (DNTGIIGLYG…LSTSPPNFSG (215 aa)). 167–174 (GVEGVGKT) is a binding site for ATP.

Potential disease resistance protein. The chain is Putative disease resistance protein At3g15700 from Arabidopsis thaliana (Mouse-ear cress).